The chain runs to 81 residues: Translational regulator CsrA (81 aa).

The protein belongs to the CsrA/RsmA family. Homodimer; the beta-strands of each monomer intercalate to form a hydrophobic core, while the alpha-helices form wings that extend away from the core.

Its subcellular location is the cytoplasm. In terms of biological role, a translational regulator that binds mRNA to regulate translation initiation and/or mRNA stability. Usually binds in the 5'-UTR at or near the Shine-Dalgarno sequence preventing ribosome-binding, thus repressing translation. Its main target seems to be the major flagellin gene, while its function is anatagonized by FliW. This is Translational regulator CsrA from Desulforapulum autotrophicum (strain ATCC 43914 / DSM 3382 / VKM B-1955 / HRM2) (Desulfobacterium autotrophicum).